The chain runs to 426 residues: Serine--tRNA ligase (426 aa).

233-235 (TAE) contacts L-serine. ATP is bound at residue 264–266 (RRE). An L-serine-binding site is contributed by glutamate 287. 351 to 354 (EISS) serves as a coordination point for ATP. Position 386 (serine 386) interacts with L-serine.

This sequence belongs to the class-II aminoacyl-tRNA synthetase family. Type-1 seryl-tRNA synthetase subfamily. Homodimer. The tRNA molecule binds across the dimer.

It is found in the cytoplasm. It carries out the reaction tRNA(Ser) + L-serine + ATP = L-seryl-tRNA(Ser) + AMP + diphosphate + H(+). The catalysed reaction is tRNA(Sec) + L-serine + ATP = L-seryl-tRNA(Sec) + AMP + diphosphate + H(+). It functions in the pathway aminoacyl-tRNA biosynthesis; selenocysteinyl-tRNA(Sec) biosynthesis; L-seryl-tRNA(Sec) from L-serine and tRNA(Sec): step 1/1. Its function is as follows. Catalyzes the attachment of serine to tRNA(Ser). Is also able to aminoacylate tRNA(Sec) with serine, to form the misacylated tRNA L-seryl-tRNA(Sec), which will be further converted into selenocysteinyl-tRNA(Sec). The polypeptide is Serine--tRNA ligase (Prochlorococcus marinus (strain NATL1A)).